Here is a 259-residue protein sequence, read N- to C-terminus: Haloacid dehalogenase-like hydrolase domain-containing protein 2 (259 aa).

2 residues coordinate Mg(2+): D13 and S15. Residues 13 to 15 and 46 to 47 contribute to the substrate site; these read DLS and TN. Positions 47–71 form a coiled coil; the sequence is NTTKESKQDLLERLKKLEFDISEDE. K50 carries the post-translational modification N6-succinyllysine. Position 179 (K179) interacts with substrate. D204 contacts Mg(2+).

It belongs to the HAD-like hydrolase superfamily. The cofactor is Mg(2+).

The polypeptide is Haloacid dehalogenase-like hydrolase domain-containing protein 2 (HDHD2) (Bos taurus (Bovine)).